A 74-amino-acid chain; its full sequence is Somatostatin-2 (74 aa).

Residues 1–46 (ARGAGLLSQDWSAVEDLLAQMSLPEADAQREAEVVSVATGGRLNLE) constitute a propeptide that is removed on maturation. Residues Cys63 and Cys74 are joined by a disulfide bond.

It belongs to the somatostatin family.

The protein resides in the secreted. Its function is as follows. Somatostatin inhibits the release of somatotropin. This is Somatostatin-2 (sst2) from Myoxocephalus scorpius (Shorthorn sculpin).